Here is a 425-residue protein sequence, read N- to C-terminus: MPTNPNSCEVCSSSSNSSCNHFGARTCKACAAFFRRTVSMKLDYQCIDQPDACRVHCDSRVICRFCRLKKCHDIGMKPLLVKSKNERKNYIRISKGLIRKRSVLGDNVKENSEEIQNDDDPQESDAEMENESTPGPSSEPSENVSAENQETVTKFLKLEASMCDRRRLLYAETPISIVLESGKEWPYENAPLKMFDYKLSQGMSKHDFVMIMDYARGMPGFDEMNYADSVFCYRLVCAVDFVINSAYYTYKRGIEHNELVLSDGTFIPMVPTPLTGYEENANLLFQSQDDLMKFRTLMPLILHQWETCVPFAQLAPSHEEFCLLKAICVWHVSYYRLSEDGRRIAIAQRNRLIRALHHVCHLDSDDVGERFGNVMMALNYIMVNIRHVVSSFVMISFFGIINVDKSMISLTSFWNKSDTSTAPSL.

A DNA-binding region (nuclear receptor) is located at residues 5 to 83; it reads PNSCEVCSSS…IGMKPLLVKS (79 aa). 2 NR C4-type zinc fingers span residues 11–30 and 46–71; these read CSSS…CKAC and CIDQ…LKKC. The interval 108–148 is disordered; the sequence is VKENSEEIQNDDDPQESDAEMENESTPGPSSEPSENVSAEN. Residues 113–130 are compositionally biased toward acidic residues; that stretch reads EEIQNDDDPQESDAEMEN. Over residues 131-142 the composition is skewed to low complexity; the sequence is ESTPGPSSEPSE. The region spanning 147–414 is the NR LBD domain; it reads ENQETVTKFL…KSMISLTSFW (268 aa).

Belongs to the nuclear hormone receptor family. May interact with nuclear hormone receptor nhr-49.

The protein localises to the nucleus. Functionally, orphan nuclear receptor. Involved in regulating fatty acid desaturase genes, acting in concert with nuclear hormone receptor nhr-49. This Caenorhabditis elegans protein is Nuclear hormone receptor family member nhr-13 (nhr-13).